The primary structure comprises 493 residues: Glutathione hydrolase 6 (493 aa).

The Cytoplasmic segment spans residues 1 to 54; sequence MERAEEPVVYQKLLPWEPSLESEEEVEEEETSEALVLNPRRHQDSSRNKAGGLP. Residues 19–52 form a disordered region; the sequence is SLESEEEVEEEETSEALVLNPRRHQDSSRNKAGG. Acidic residues predominate over residues 20 to 32; the sequence is LESEEEVEEEETS. The chain crosses the membrane as a helical; Signal-anchor for type II membrane protein span at residues 55-75; the sequence is GTWARVVAALLLLAVGCSLAV. Over 76–493 the chain is Extracellular; the sequence is RQLQNQGRST…PHACCPFQGF (418 aa). The disordered stretch occupies residues 83–105; that stretch reads RSTGSLGSVAPPPGGHSHGPGVY. N-linked (GlcNAc...) asparagine glycosylation is found at Asn161 and Asn370. Positions 442–455 are enriched in low complexity; sequence PPTQAQHQHQGQQE. The tract at residues 442–464 is disordered; it reads PPTQAQHQHQGQQEPTEHPSTCG.

This sequence belongs to the gamma-glutamyltransferase family. In terms of assembly, heterodimer composed of the light and heavy chains. The active site is located in the light chain. In terms of processing, cleaved by autocatalysis into a large and a small subunit and the autocatalytic cleavage is essential to the functional activation of the enzyme.

It is found in the membrane. It carries out the reaction an N-terminal (5-L-glutamyl)-[peptide] + an alpha-amino acid = 5-L-glutamyl amino acid + an N-terminal L-alpha-aminoacyl-[peptide]. The enzyme catalyses glutathione + H2O = L-cysteinylglycine + L-glutamate. It catalyses the reaction an S-substituted glutathione + H2O = an S-substituted L-cysteinylglycine + L-glutamate. The protein operates within sulfur metabolism; glutathione metabolism. Hydrolyzes and transfers gamma-glutamyl moieties from glutathione and other gamma-glutamyl compounds to acceptors. This Homo sapiens (Human) protein is Glutathione hydrolase 6.